Consider the following 711-residue polypeptide: Constitutive ornithine decarboxylase (711 aa).

Position 347 is an N6-(pyridoxal phosphate)lysine (lysine 347).

Belongs to the Orn/Lys/Arg decarboxylase class-I family. It depends on pyridoxal 5'-phosphate as a cofactor.

The enzyme catalyses L-ornithine + H(+) = putrescine + CO2. Its pathway is amine and polyamine biosynthesis; putrescine biosynthesis via L-ornithine pathway; putrescine from L-ornithine: step 1/1. The polypeptide is Constitutive ornithine decarboxylase (speC) (Escherichia coli (strain K12)).